Reading from the N-terminus, the 380-residue chain is Cytosolic acyl coenzyme A thioester hydrolase (380 aa).

Positions 50 to 168 constitute a HotDog ACOT-type 1 domain; sequence PCGACITGRI…TLWYVPLSLK (119 aa). The active site involves asparagine 66. 2 positions are modified to N6-acetyllysine: lysine 168 and lysine 198. In terms of domain architecture, HotDog ACOT-type 2 spans 224–338; it reads SYSQSSLIHL…FFTYVSLSQE (115 aa). Aspartate 255 is an active-site residue. N6-acetyllysine is present on lysine 283. Residues 350–380 form a disordered region; it reads ETEDEKKRFEEGKGRYLQMKAKRQGHAEPQP. Residues 353-363 show a composition bias toward basic and acidic residues; it reads DEKKRFEEGKG.

Homohexamer. Isoform 4 is expressed exclusively in brain.

The protein resides in the cytoplasm. Its subcellular location is the cytosol. It is found in the mitochondrion. It carries out the reaction hexadecanoyl-CoA + H2O = hexadecanoate + CoA + H(+). It catalyses the reaction octanoyl-CoA + H2O = octanoate + CoA + H(+). The catalysed reaction is dodecanoyl-CoA + H2O = dodecanoate + CoA + H(+). The enzyme catalyses (9Z)-octadecenoyl-CoA + H2O = (9Z)-octadecenoate + CoA + H(+). It carries out the reaction tetradecanoyl-CoA + H2O = tetradecanoate + CoA + H(+). It catalyses the reaction decanoyl-CoA + H2O = decanoate + CoA + H(+). The catalysed reaction is octadecanoyl-CoA + H2O = octadecanoate + CoA + H(+). Its pathway is lipid metabolism; fatty acid metabolism. Its function is as follows. Catalyzes the hydrolysis of acyl-CoAs into free fatty acids and coenzyme A (CoASH), regulating their respective intracellular levels. Preferentially hydrolyzes palmitoyl-CoA, but has a broad specificity acting on other fatty acyl-CoAs with chain-lengths of C8-C18. May play an important physiological function in brain. This is Cytosolic acyl coenzyme A thioester hydrolase (ACOT7) from Homo sapiens (Human).